The primary structure comprises 371 residues: Integrator complex assembly factor WDR73 (371 aa).

WD repeat units lie at residues 81–121 (FSDR…DVIE), 273–313 (SPDP…GKKT), and 333–371 (DSAPLVTTHTWHPRKPRTLLSAASDSSLHVWDWVDLQAS).

The protein belongs to the WD repeat WDR73 family. Interacts with INTS9 and INTS11; the interaction is direct. Part of the multiprotein complex composed of BRAT1, WDR73, as well as integrator complex subunits INTS9 and INTS11.

The protein resides in the cytoplasm. The protein localises to the cytoskeleton. Its subcellular location is the spindle. It is found in the spindle pole. It localises to the cleavage furrow. Its function is as follows. Component of a multiprotein complex required for the assembly of the RNA endonuclease module of the integrator complex. Associates with INTS9 and INTS11 in the cytoplasm, stabilizing the INTS9-INTS11 heterodimer and blocking the active site of INTS11. BRAT1 then joins the complex and plugs the active site of INTS11, leading to WDR73 release and nuclear import of INTS9 and INTS11. This Mus musculus (Mouse) protein is Integrator complex assembly factor WDR73 (Wdr73).